A 213-amino-acid polypeptide reads, in one-letter code: Pyrrolidone-carboxylate peptidase (213 aa).

Active-site residues include glutamate 78, cysteine 141, and histidine 165.

The protein belongs to the peptidase C15 family. In terms of assembly, homotetramer.

Its subcellular location is the cytoplasm. It carries out the reaction Release of an N-terminal pyroglutamyl group from a polypeptide, the second amino acid generally not being Pro.. Removes 5-oxoproline from various penultimate amino acid residues except L-proline. This is Pyrrolidone-carboxylate peptidase from Clostridium botulinum (strain Alaska E43 / Type E3).